A 300-amino-acid polypeptide reads, in one-letter code: Large ribosomal subunit protein bL9m (300 aa).

Belongs to the bacterial ribosomal protein bL9 family. Component of the mitochondrial large ribosomal subunit (mt-LSU). Mature N.crassa 74S mitochondrial ribosomes consist of a small (37S) and a large (54S) subunit. The 37S small subunit contains a 16S ribosomal RNA (16S mt-rRNA) and 32 different proteins. The 54S large subunit contains a 23S rRNA (23S mt-rRNA) and 42 different proteins.

It is found in the mitochondrion. In terms of biological role, component of the mitochondrial ribosome (mitoribosome), a dedicated translation machinery responsible for the synthesis of mitochondrial genome-encoded proteins, including at least some of the essential transmembrane subunits of the mitochondrial respiratory chain. The mitoribosomes are attached to the mitochondrial inner membrane and translation products are cotranslationally integrated into the membrane. This Neurospora crassa (strain ATCC 24698 / 74-OR23-1A / CBS 708.71 / DSM 1257 / FGSC 987) protein is Large ribosomal subunit protein bL9m (mrpl50).